The chain runs to 387 residues: Cytochrome b (387 aa).

4 helical membrane-spanning segments follow: residues 32–52, 76–98, 113–133, and 179–199; these read FGSLLLLCLIIQIITGVTLAM, WLVRYLHSNTASAFFFLVYLHIG, VWAIGTVILIVMIVTAFLGYV, and FFALHYLLPFILVALVLMHLI. Heme b contacts are provided by His82 and His96. Residues His183 and His197 each coordinate heme b. Residue His202 participates in a ubiquinone binding. Helical transmembrane passes span 226-246, 290-310, 322-342, and 349-369; these read YLFKDLITIFIFIFVLSSFVF, LLGVIAMFAAILAIMLLPITD, LSKFAFWVFVVNFLILMKLGA, and FIELGQLSTALYFGHFIIIVP.

The protein belongs to the cytochrome b family. In terms of assembly, fungal cytochrome b-c1 complex contains 10 subunits; 3 respiratory subunits, 2 core proteins and 5 low-molecular weight proteins. Cytochrome b-c1 complex is a homodimer. Heme b is required as a cofactor.

It localises to the mitochondrion inner membrane. Component of the ubiquinol-cytochrome c reductase complex (complex III or cytochrome b-c1 complex) that is part of the mitochondrial respiratory chain. The b-c1 complex mediates electron transfer from ubiquinol to cytochrome c. Contributes to the generation of a proton gradient across the mitochondrial membrane that is then used for ATP synthesis. This chain is Cytochrome b (COB), found in Podospora anserina (strain S / ATCC MYA-4624 / DSM 980 / FGSC 10383) (Pleurage anserina).